A 1099-amino-acid polypeptide reads, in one-letter code: Probable inorganic carbon transporter subunit DabA (1099 aa).

Residues 175–194 (RQGRRRFATTERRTRRTRRS) form a disordered region. Positions 176–194 (QGRRRFATTERRTRRTRRS) are enriched in basic residues. Positions 514, 516, 722, and 737 each coordinate Zn(2+). Residues 1071–1099 (AGAGAAQPTRDAIELPEQASGPLPARDGQ) form a disordered region.

This sequence belongs to the inorganic carbon transporter (TC 9.A.2) DabA family. Forms a complex with DabB. Zn(2+) is required as a cofactor.

Its subcellular location is the cell membrane. Part of an energy-coupled inorganic carbon pump. The polypeptide is Probable inorganic carbon transporter subunit DabA (Parafrankia sp. (strain EAN1pec)).